We begin with the raw amino-acid sequence, 235 residues long: Phosphoribosylaminoimidazole-succinocarboxamide synthase (235 aa).

The protein belongs to the SAICAR synthetase family.

The catalysed reaction is 5-amino-1-(5-phospho-D-ribosyl)imidazole-4-carboxylate + L-aspartate + ATP = (2S)-2-[5-amino-1-(5-phospho-beta-D-ribosyl)imidazole-4-carboxamido]succinate + ADP + phosphate + 2 H(+). Its pathway is purine metabolism; IMP biosynthesis via de novo pathway; 5-amino-1-(5-phospho-D-ribosyl)imidazole-4-carboxamide from 5-amino-1-(5-phospho-D-ribosyl)imidazole-4-carboxylate: step 1/2. The polypeptide is Phosphoribosylaminoimidazole-succinocarboxamide synthase (Clostridium kluyveri (strain NBRC 12016)).